A 1523-amino-acid polypeptide reads, in one-letter code: uncharacterized protein (1523 aa).

A disordered region spans residues 1–89 (MLPTSSNNEE…GSSNMNPYDR (89 aa)). 993-1000 (SPFGCGKS) serves as a coordination point for ATP. Polar residues-rich tracts occupy residues 1463-1476 (TSRQSKQQRANEYN) and 1485-1498 (QSNNDYGSQRSVTN). The disordered stretch occupies residues 1463 to 1498 (TSRQSKQQRANEYNSQHKHVKRQSNNDYGSQRSVTN).

It belongs to the DNA2/NAM7 helicase family.

This is an uncharacterized protein from Caenorhabditis elegans.